The sequence spans 60 residues: Large ribosomal subunit protein bL32 (60 aa).

It belongs to the bacterial ribosomal protein bL32 family.

This Desulfovibrio desulfuricans (strain ATCC 27774 / DSM 6949 / MB) protein is Large ribosomal subunit protein bL32.